We begin with the raw amino-acid sequence, 466 residues long: Fumarate hydratase class II (466 aa).

Substrate-binding positions include 99-101, 129-132, 139-141, and Thr187; these read SGT, HPND, and SSN. The active-site Proton donor/acceptor is His188. The active site involves Ser318. Residues Ser319 and 324–326 each bind substrate; that span reads KVN.

It belongs to the class-II fumarase/aspartase family. Fumarase subfamily. As to quaternary structure, homotetramer.

The protein localises to the cytoplasm. It catalyses the reaction (S)-malate = fumarate + H2O. It functions in the pathway carbohydrate metabolism; tricarboxylic acid cycle; (S)-malate from fumarate: step 1/1. In terms of biological role, involved in the TCA cycle. Catalyzes the stereospecific interconversion of fumarate to L-malate. In Thermus aquaticus, this protein is Fumarate hydratase class II.